We begin with the raw amino-acid sequence, 545 residues long: CTP synthase (545 aa).

The segment at 1–266 (MTTNYIFVTG…DDYICKRFSL (266 aa)) is amidoligase domain. Ser14 is a binding site for CTP. Ser14 serves as a coordination point for UTP. ATP-binding positions include 15-20 (SLGKGI) and Asp72. Residues Asp72 and Glu140 each contribute to the Mg(2+) site. CTP contacts are provided by residues 147–149 (DIE), 187–192 (KTKPTQ), and Lys223. Residues 187-192 (KTKPTQ) and Lys223 contribute to the UTP site. 239-241 (KDV) provides a ligand contact to ATP. The Glutamine amidotransferase type-1 domain maps to 291 to 542 (TIGMVGKYIE…VKAASEYQKR (252 aa)). Gly352 contributes to the L-glutamine binding site. The active-site Nucleophile; for glutamine hydrolysis is the Cys379. L-glutamine is bound by residues 380–383 (LGMQ), Glu403, and Arg470. Active-site residues include His515 and Glu517.

It belongs to the CTP synthase family. Homotetramer.

The catalysed reaction is UTP + L-glutamine + ATP + H2O = CTP + L-glutamate + ADP + phosphate + 2 H(+). It catalyses the reaction L-glutamine + H2O = L-glutamate + NH4(+). It carries out the reaction UTP + NH4(+) + ATP = CTP + ADP + phosphate + 2 H(+). It functions in the pathway pyrimidine metabolism; CTP biosynthesis via de novo pathway; CTP from UDP: step 2/2. Allosterically activated by GTP, when glutamine is the substrate; GTP has no effect on the reaction when ammonia is the substrate. The allosteric effector GTP functions by stabilizing the protein conformation that binds the tetrahedral intermediate(s) formed during glutamine hydrolysis. Inhibited by the product CTP, via allosteric rather than competitive inhibition. Its function is as follows. Catalyzes the ATP-dependent amination of UTP to CTP with either L-glutamine or ammonia as the source of nitrogen. Regulates intracellular CTP levels through interactions with the four ribonucleotide triphosphates. This is CTP synthase from Klebsiella pneumoniae (strain 342).